Consider the following 250-residue polypeptide: Ribosomal RNA small subunit methyltransferase J (250 aa).

S-adenosyl-L-methionine is bound by residues 101–102 (RD), 117–118 (ER), 153–154 (SS), and D171.

This sequence belongs to the methyltransferase superfamily. RsmJ family.

It localises to the cytoplasm. It carries out the reaction guanosine(1516) in 16S rRNA + S-adenosyl-L-methionine = N(2)-methylguanosine(1516) in 16S rRNA + S-adenosyl-L-homocysteine + H(+). Specifically methylates the guanosine in position 1516 of 16S rRNA. This is Ribosomal RNA small subunit methyltransferase J from Cronobacter sakazakii (strain ATCC BAA-894) (Enterobacter sakazakii).